We begin with the raw amino-acid sequence, 655 residues long: A-type voltage-gated potassium channel KCND3 (655 aa).

Over 1-182 the chain is Cytoplasmic; sequence MAAGVAAWLP…FENPHTSTLA (182 aa). Residues 6-21 form an interaction with KCNIP1 and KCNIP2 region; the sequence is AAWLPFARAAAIGWMP. The tract at residues 70 to 78 is interaction with KCNIP1; that stretch reads EKEFFFNED. 4 residues coordinate Zn(2+): histidine 104, cysteine 110, cysteine 131, and cysteine 132. Serine 153 is subject to Phosphoserine. A helical transmembrane segment spans residues 183–204; that stretch reads LVFYYVTGFFIAVSVITNVVET. The Extracellular portion of the chain corresponds to 205–223; that stretch reads VPCGTVPGSKELPCGERYS. Residues 224 to 246 traverse the membrane as a helical segment; that stretch reads VAFFCLDTACVMIFTVEYLLRLF. Over 247 to 253 the chain is Cytoplasmic; that stretch reads AAPSRYR. A helical transmembrane segment spans residues 254-277; the sequence is FIRSVMSIIDVVAIMPYYIGLVMT. Over 278 to 283 the chain is Extracellular; sequence NNEDVS. The chain crosses the membrane as a helical; Voltage-sensor span at residues 284–306; the sequence is GAFVTLRVFRVFRIFKFSRHSQG. At 307-318 the chain is on the cytoplasmic side; that stretch reads LRILGYTLKSCA. A helical transmembrane segment spans residues 319–343; the sequence is SELGFLLFSLTMAIIIFATVMFYAE. Residues 344–352 are Extracellular-facing; it reads KGSSASKFT. An intramembrane region (helical) is located at residues 353–366; it reads SIPASFWYTIVTMT. K(+) contacts are provided by threonine 367, leucine 368, glycine 369, and tyrosine 370. Residues 367–372 carry the Selectivity filter motif; sequence TLGYGD. The stretch at 367–374 is an intramembrane region; sequence TLGYGDMV. A helical membrane pass occupies residues 378–400; sequence IAGKIFGSICSLSGVLVIALPVP. Over 401-655 the chain is Cytoplasmic; sequence VIVSNFSRIY…ASNVVKVSAL (255 aa). Position 459 is a phosphothreonine (threonine 459). An interaction with KCNIP1 and KCNIP2 region spans residues 470–487; it reads SLIESQHHHLLHCLEKTT. Positions 472-487 are mediates dendritic targeting; the sequence is IESQHHHLLHCLEKTT. Residues 525-548 show a composition bias toward polar residues; the sequence is MQNYPSTRSPSLSSHPGLTTTCCS. The tract at residues 525–565 is disordered; that stretch reads MQNYPSTRSPSLSSHPGLTTTCCSRRSKKTTHLPNSNLPAT. Serine 569 is subject to Phosphoserine; by CaMK2D. At serine 585 the chain carries Phosphoserine. The interval 615 to 655 is disordered; sequence ISIPTPPALTPEGESRPPPASPGPNTNIPSIASNVVKVSAL. The segment covering 637–647 has biased composition (polar residues); that stretch reads GPNTNIPSIAS.

The protein belongs to the potassium channel family. D (Shal) (TC 1.A.1.2) subfamily. Kv4.3/KCND3 sub-subfamily. Homotetramer. Heterotetramer with KCND2. Associates with the regulatory subunits KCNIP3 and KCNIP4. Interacts with KCNE1, KCNE2, SCN1B and KCNAB1 and DLG1. Component of heteromultimeric potassium channels. Identified in potassium channel complexes containing KCND1, KCND2, KCND3, KCNIP1, KCNIP2, KCNIP3, KCNIP4, DPP6 and DPP10. Interacts with KCNIP1; each KCNIP1 monomer interacts with two adjacent KCND3 subunits, through both the N-terminal inactivation ball of a KCND3 subunit and a C-terminal helix from the adjacent KCND3 subunit, clamping them together; this interaction stabilizes the tetrameric form and modulates the channel gating kinetics namely channel activation and inactivation kinetics and rate of recovery from inactivation. Interacts with DPP6; this interaction modulates the channel gating kinetics namely channel activation and inactivation kinetics and rate of recovery from inactivation. Interacts with KCNIP2; each KCNIP2 monomer interacts with two adjacent KCND3 subunits, through both the N-terminal inactivation ball of a KCND3 subunit and a C-terminal helix from the adjacent KCND3 subunit, clamping them together; this interaction modulates the channel gating kinetics. Post-translationally, regulated through phosphorylation at Ser-569 by CaMK2D. In terms of tissue distribution, highly expressed in heart and brain, in particular in cortex, cerebellum, amygdala and caudate nucleus. Detected at lower levels in liver, skeletal muscle, kidney and pancreas.

It is found in the cell membrane. The protein localises to the sarcolemma. The protein resides in the cell projection. Its subcellular location is the dendrite. It catalyses the reaction K(+)(in) = K(+)(out). Functionally, pore-forming (alpha) subunit of voltage-gated A-type potassium channels that mediates transmembrane potassium transport in excitable membranes, in brain and heart. In cardiomyocytes, may generate the transient outward potassium current I(To). In neurons, may conduct the transient subthreshold somatodendritic A-type potassium current (ISA). Kinetics properties are characterized by fast activation at subthreshold membrane potentials, rapid inactivation, and quick recovery from inactivation. Channel properties are modulated by interactions with regulatory subunits. Interaction with the regulatory subunits KCNIP1 or KCNIP2 modulates the channel gating kinetics namely channel activation and inactivation kinetics and rate of recovery from inactivation. Likewise, interaction with DPP6 modulates the channel gating kinetics namely channel activation and inactivation kinetics. In Homo sapiens (Human), this protein is A-type voltage-gated potassium channel KCND3 (KCND3).